Reading from the N-terminus, the 28-residue chain is leu operon leader peptide (28 aa).

Functionally, involved in control of the biosynthesis of leucine. This is leu operon leader peptide (leuL) from Salmonella typhimurium (strain LT2 / SGSC1412 / ATCC 700720).